We begin with the raw amino-acid sequence, 343 residues long: Anthranilate phosphoribosyltransferase (343 aa).

5-phospho-alpha-D-ribose 1-diphosphate contacts are provided by residues Gly-81, 84–85, 91–94, 109–117, and Ser-121; these read GD, NLST, and KHGNRSVSS. Position 81 (Gly-81) interacts with anthranilate. Ser-93 contacts Mg(2+). Asn-112 is a binding site for anthranilate. Residue Arg-167 coordinates anthranilate. Residues Asp-226 and Glu-227 each coordinate Mg(2+).

It belongs to the anthranilate phosphoribosyltransferase family. As to quaternary structure, homodimer. Mg(2+) is required as a cofactor.

It catalyses the reaction N-(5-phospho-beta-D-ribosyl)anthranilate + diphosphate = 5-phospho-alpha-D-ribose 1-diphosphate + anthranilate. Its pathway is amino-acid biosynthesis; L-tryptophan biosynthesis; L-tryptophan from chorismate: step 2/5. In terms of biological role, catalyzes the transfer of the phosphoribosyl group of 5-phosphorylribose-1-pyrophosphate (PRPP) to anthranilate to yield N-(5'-phosphoribosyl)-anthranilate (PRA). In Cellvibrio japonicus (strain Ueda107) (Pseudomonas fluorescens subsp. cellulosa), this protein is Anthranilate phosphoribosyltransferase.